Here is a 232-residue protein sequence, read N- to C-terminus: Rho-related GTP-binding protein Rho6 (232 aa).

GTP is bound by residues 23–28 (QCGKTA), 38–45 (YPETYVPT), 67–71 (DTSGS), 125–128 (CKTD), and 169–170 (AF). The Effector region signature appears at 42–50 (YVPTVFENY). C229 carries the post-translational modification Cysteine methyl ester. C229 is lipidated: S-geranylgeranyl cysteine. A propeptide spans 230–232 (SIM) (removed in mature form).

This sequence belongs to the small GTPase superfamily. Rho family. As to quaternary structure, binds GRB7 and PLXNB1. Interacts with UBXD5. Interacts with PLXNA2. As to expression, mostly expressed in brain and liver.

The protein resides in the cell membrane. The protein localises to the cytoplasm. It is found in the cytoskeleton. Functionally, lacks intrinsic GTPase activity. Has a low affinity for GDP, and constitutively binds GTP. Controls rearrangements of the actin cytoskeleton. Induces the Rac-dependent neuritic process formation in part by disruption of the cortical actin filaments. Causes the formation of many neuritic processes from the cell body with disruption of the cortical actin filaments. This Homo sapiens (Human) protein is Rho-related GTP-binding protein Rho6 (RND1).